The chain runs to 2145 residues: Glutamate synthase [NADH] (2145 aa).

Residues 1–53 (MPVLKSDNFDPLEEAYEGGTIQNYNDEHHLHKSWANVIPDKRGLYDPDYEHDA) constitute a propeptide that is removed on maturation. The For GATase activity role is filled by C54. The Glutamine amidotransferase type-2 domain occupies 54-455 (CGVGFVANKH…PGDLFLVDTQ (402 aa)). Position 1132 to 1189 (1132 to 1189 (LAETHQTLVLNDLRRNVVVQTDGQLRTGFDIAVAVLLGAESFTLATVPLIAMGCVMLR)) interacts with FMN. [3Fe-4S] cluster-binding residues include C1185, C1191, and C1196. Positions 1551–1600 (KKVLLKEKAEAAKAKAKATSEYLKKFRSNQEVDDEVNTLLIANQKAKEQE) form a coiled coil. 1928–1942 (GGGDTGNDCLGTSVR) contributes to the NAD(+) binding site. T2070 is subject to Phosphothreonine.

It belongs to the glutamate synthase family. As to quaternary structure, homotrimer. [3Fe-4S] cluster serves as cofactor. The cofactor is FAD. Requires FMN as cofactor.

The catalysed reaction is 2 L-glutamate + NAD(+) = L-glutamine + 2-oxoglutarate + NADH + H(+). Its pathway is amino-acid biosynthesis; L-glutamate biosynthesis via GLT pathway; L-glutamate from 2-oxoglutarate and L-glutamine (NAD(+) route): step 1/1. It participates in energy metabolism; nitrogen metabolism. Its activity is regulated as follows. Inhibited by homocysteine sulfonamide. Functionally, forms L-glutamate from L-glutamine and 2-oxoglutarate. Represents an alternative pathway to L-glutamate dehydrogenase for the biosynthesis of L-glutamate. Participates with glutamine synthetase in ammonia assimilation processes. The enzyme is specific for NADH, L-glutamine and 2-oxoglutarate. The polypeptide is Glutamate synthase [NADH] (GLT1) (Saccharomyces cerevisiae (strain ATCC 204508 / S288c) (Baker's yeast)).